A 483-amino-acid polypeptide reads, in one-letter code: Xylulose kinase (483 aa).

Residue 77-78 (MH) participates in substrate binding. The active-site Proton acceptor is the Asp-233.

This sequence belongs to the FGGY kinase family.

It carries out the reaction D-xylulose + ATP = D-xylulose 5-phosphate + ADP + H(+). Catalyzes the phosphorylation of D-xylulose to D-xylulose 5-phosphate. This is Xylulose kinase from Klebsiella pneumoniae.